An 83-amino-acid chain; its full sequence is UPF0346 protein M28_Spy0369 (83 aa).

Belongs to the UPF0346 family.

The protein is UPF0346 protein M28_Spy0369 of Streptococcus pyogenes serotype M28 (strain MGAS6180).